A 435-amino-acid polypeptide reads, in one-letter code: Methylenetetrahydrofolate--tRNA-(uracil-5-)-methyltransferase TrmFO (435 aa).

7–12 provides a ligand contact to FAD; it reads GAGLAG.

It belongs to the MnmG family. TrmFO subfamily. FAD is required as a cofactor.

Its subcellular location is the cytoplasm. It carries out the reaction uridine(54) in tRNA + (6R)-5,10-methylene-5,6,7,8-tetrahydrofolate + NADH + H(+) = 5-methyluridine(54) in tRNA + (6S)-5,6,7,8-tetrahydrofolate + NAD(+). The enzyme catalyses uridine(54) in tRNA + (6R)-5,10-methylene-5,6,7,8-tetrahydrofolate + NADPH + H(+) = 5-methyluridine(54) in tRNA + (6S)-5,6,7,8-tetrahydrofolate + NADP(+). Its function is as follows. Catalyzes the folate-dependent formation of 5-methyl-uridine at position 54 (M-5-U54) in all tRNAs. This Thermotoga neapolitana (strain ATCC 49049 / DSM 4359 / NBRC 107923 / NS-E) protein is Methylenetetrahydrofolate--tRNA-(uracil-5-)-methyltransferase TrmFO.